A 351-amino-acid chain; its full sequence is DNA polymerase IV (351 aa).

Residues 4-185 enclose the UmuC domain; it reads IIHVDMDCFF…LPLEKIPGVG (182 aa). Aspartate 8 and aspartate 103 together coordinate Mg(2+). Glutamate 104 is a catalytic residue.

Belongs to the DNA polymerase type-Y family. Monomer. Mg(2+) is required as a cofactor.

Its subcellular location is the cytoplasm. The catalysed reaction is DNA(n) + a 2'-deoxyribonucleoside 5'-triphosphate = DNA(n+1) + diphosphate. Poorly processive, error-prone DNA polymerase involved in untargeted mutagenesis. Copies undamaged DNA at stalled replication forks, which arise in vivo from mismatched or misaligned primer ends. These misaligned primers can be extended by PolIV. Exhibits no 3'-5' exonuclease (proofreading) activity. May be involved in translesional synthesis, in conjunction with the beta clamp from PolIII. The sequence is that of DNA polymerase IV from Shigella flexneri.